The primary structure comprises 331 residues: Large ribosomal subunit protein uL3 (331 aa).

This sequence belongs to the universal ribosomal protein uL3 family. As to quaternary structure, part of the 50S ribosomal subunit. Forms a cluster with proteins L14 and L24e.

Its function is as follows. One of the primary rRNA binding proteins, it binds directly near the 3'-end of the 23S rRNA, where it nucleates assembly of the 50S subunit. The sequence is that of Large ribosomal subunit protein uL3 from Thermoplasma acidophilum (strain ATCC 25905 / DSM 1728 / JCM 9062 / NBRC 15155 / AMRC-C165).